A 211-amino-acid polypeptide reads, in one-letter code: Uridine kinase (211 aa).

Gly-12 to Thr-19 provides a ligand contact to ATP.

This sequence belongs to the uridine kinase family.

It localises to the cytoplasm. It catalyses the reaction uridine + ATP = UMP + ADP + H(+). The catalysed reaction is cytidine + ATP = CMP + ADP + H(+). The protein operates within pyrimidine metabolism; CTP biosynthesis via salvage pathway; CTP from cytidine: step 1/3. It participates in pyrimidine metabolism; UMP biosynthesis via salvage pathway; UMP from uridine: step 1/1. In Bacillus velezensis (strain DSM 23117 / BGSC 10A6 / LMG 26770 / FZB42) (Bacillus amyloliquefaciens subsp. plantarum), this protein is Uridine kinase.